The chain runs to 269 residues: uncharacterized protein (269 aa).

Positions 1 to 21 (MAYSSSNSDIEDDSSKSNSNL) are disordered.

This is an uncharacterized protein from Homo sapiens (Human).